The chain runs to 540 residues: Cytochrome bc1 complex cytochrome b subunit (540 aa).

The helical transmembrane segment at 40-60 (EIALYSFIILLLTGVYLTLFF) threads the bilayer. The heme site is built by histidine 105 and histidine 119. Helical transmembrane passes span 109 to 129 (ALTFMVSMTVHMLRIFFTGAF), 137 to 157 (WIIGCVLLFLGMAEGFMGYSL), and 169 to 189 (IMSAIILALPIIGTWLHWLIF). 2 residues coordinate heme: histidine 206 and histidine 221. The next 5 helical transmembrane spans lie at 207–227 (VLIIPGIILGLIAAHLALVWY), 259–279 (FGLVTFGVLALLAGLTSINAI), 325–345 (AFWVALLCGVLVGLLVGYPFI), 371–391 (LGVMAIVFYFLLTLSGGNDLF), and 408–428 (IGLIVLPPLAYFITYRICLGL).

This sequence belongs to the cytochrome b family. In terms of assembly, the cytochrome bc1 complex is composed of a cytochrome b (QcrB), the Rieske protein iron-sulfur (QcrA) and a diheme cytochrome c (QcrC) subunit. The cofactor is heme.

It localises to the cell membrane. It catalyses the reaction a quinol + 2 Fe(III)-[cytochrome c](out) = a quinone + 2 Fe(II)-[cytochrome c](out) + 2 H(+)(out). Its function is as follows. Cytochrome b subunit of the cytochrome bc1 complex, an essential component of the respiratory electron transport chain required for ATP synthesis. The bc1 complex catalyzes the oxidation of menaquinol and the reduction of cytochrome c in the respiratory chain. The bc1 complex operates through a Q-cycle mechanism that couples electron transfer to generation of the proton gradient that drives ATP synthesis. The polypeptide is Cytochrome bc1 complex cytochrome b subunit (qcrB) (Corynebacterium diphtheriae (strain ATCC 700971 / NCTC 13129 / Biotype gravis)).